A 440-amino-acid chain; its full sequence is Xylose isomerase (440 aa).

Active-site residues include histidine 100 and aspartate 103. Mg(2+)-binding residues include glutamate 231, glutamate 267, histidine 270, aspartate 295, aspartate 306, aspartate 308, and aspartate 338.

Belongs to the xylose isomerase family. In terms of assembly, homotetramer. Mg(2+) is required as a cofactor.

It localises to the cytoplasm. The enzyme catalyses alpha-D-xylose = alpha-D-xylulofuranose. The polypeptide is Xylose isomerase (Burkholderia thailandensis (strain ATCC 700388 / DSM 13276 / CCUG 48851 / CIP 106301 / E264)).